A 704-amino-acid polypeptide reads, in one-letter code: Elongation factor G (704 aa).

A tr-type G domain is found at 6–282; it reads NKVRNIGIMA…AVIDYLPTPL (277 aa). Residues 15-22, 79-83, and 133-136 contribute to the GTP site; these read AHIDAGKT, DTPGH, and NKMD.

It belongs to the TRAFAC class translation factor GTPase superfamily. Classic translation factor GTPase family. EF-G/EF-2 subfamily.

The protein resides in the cytoplasm. Functionally, catalyzes the GTP-dependent ribosomal translocation step during translation elongation. During this step, the ribosome changes from the pre-translocational (PRE) to the post-translocational (POST) state as the newly formed A-site-bound peptidyl-tRNA and P-site-bound deacylated tRNA move to the P and E sites, respectively. Catalyzes the coordinated movement of the two tRNA molecules, the mRNA and conformational changes in the ribosome. In Corynebacterium diphtheriae (strain ATCC 700971 / NCTC 13129 / Biotype gravis), this protein is Elongation factor G.